Reading from the N-terminus, the 258-residue chain is UPF0246 protein YaaA (258 aa).

This sequence belongs to the UPF0246 family.

In Escherichia coli (strain K12 / MC4100 / BW2952), this protein is UPF0246 protein YaaA.